Consider the following 95-residue polypeptide: MIKENVYFDGNVKSLGFSQQDGESTVGVMAPGQYTFGTGAPERMTVVKGALTIKRVTDADWVTFTAGEAFEVAGNSSFDLQVEVATAYLCEFLPA.

The protein belongs to the nucleoside phosphorylase PpnP family.

It carries out the reaction a purine D-ribonucleoside + phosphate = a purine nucleobase + alpha-D-ribose 1-phosphate. The catalysed reaction is adenosine + phosphate = alpha-D-ribose 1-phosphate + adenine. It catalyses the reaction cytidine + phosphate = cytosine + alpha-D-ribose 1-phosphate. The enzyme catalyses guanosine + phosphate = alpha-D-ribose 1-phosphate + guanine. It carries out the reaction inosine + phosphate = alpha-D-ribose 1-phosphate + hypoxanthine. The catalysed reaction is thymidine + phosphate = 2-deoxy-alpha-D-ribose 1-phosphate + thymine. It catalyses the reaction uridine + phosphate = alpha-D-ribose 1-phosphate + uracil. The enzyme catalyses xanthosine + phosphate = alpha-D-ribose 1-phosphate + xanthine. Catalyzes the phosphorolysis of diverse nucleosides, yielding D-ribose 1-phosphate and the respective free bases. Can use uridine, adenosine, guanosine, cytidine, thymidine, inosine and xanthosine as substrates. Also catalyzes the reverse reactions. The chain is Pyrimidine/purine nucleoside phosphorylase from Vibrio cholerae serotype O1 (strain ATCC 39315 / El Tor Inaba N16961).